The sequence spans 164 residues: 3-isopropylmalate dehydratase small subunit 2 (164 aa).

This sequence belongs to the LeuD family. LeuD type 2 subfamily. In terms of assembly, heterodimer of LeuC and LeuD.

The catalysed reaction is (2R,3S)-3-isopropylmalate = (2S)-2-isopropylmalate. It participates in amino-acid biosynthesis; L-leucine biosynthesis; L-leucine from 3-methyl-2-oxobutanoate: step 2/4. In terms of biological role, catalyzes the isomerization between 2-isopropylmalate and 3-isopropylmalate, via the formation of 2-isopropylmaleate. This is 3-isopropylmalate dehydratase small subunit 2 (leuD2) from Pyrococcus furiosus (strain ATCC 43587 / DSM 3638 / JCM 8422 / Vc1).